Consider the following 354-residue polypeptide: tRNA-specific 2-thiouridylase MnmA (354 aa).

Residues 6–13 (LLSGGVDS) and L33 each bind ATP. C100 (nucleophile) is an active-site residue. Cysteines 100 and 195 form a disulfide. G123 is an ATP binding site. The interaction with tRNA stretch occupies residues 145–147 (KDQ). The active-site Cysteine persulfide intermediate is the C195.

This sequence belongs to the MnmA/TRMU family.

Its subcellular location is the cytoplasm. It catalyses the reaction S-sulfanyl-L-cysteinyl-[protein] + uridine(34) in tRNA + AH2 + ATP = 2-thiouridine(34) in tRNA + L-cysteinyl-[protein] + A + AMP + diphosphate + H(+). Functionally, catalyzes the 2-thiolation of uridine at the wobble position (U34) of tRNA, leading to the formation of s(2)U34. The protein is tRNA-specific 2-thiouridylase MnmA of Borrelia recurrentis (strain A1).